A 256-amino-acid polypeptide reads, in one-letter code: Triosephosphate isomerase (256 aa).

9–11 (NWK) contributes to the substrate binding site. Catalysis depends on histidine 95, which acts as the Electrophile. Glutamate 167 acts as the Proton acceptor in catalysis. Substrate contacts are provided by residues glycine 173, serine 213, and 234 to 235 (GG).

The protein belongs to the triosephosphate isomerase family. In terms of assembly, homodimer.

It localises to the cytoplasm. It carries out the reaction D-glyceraldehyde 3-phosphate = dihydroxyacetone phosphate. It functions in the pathway carbohydrate biosynthesis; gluconeogenesis. Its pathway is carbohydrate degradation; glycolysis; D-glyceraldehyde 3-phosphate from glycerone phosphate: step 1/1. Functionally, involved in the gluconeogenesis. Catalyzes stereospecifically the conversion of dihydroxyacetone phosphate (DHAP) to D-glyceraldehyde-3-phosphate (G3P). The polypeptide is Triosephosphate isomerase (Symbiobacterium thermophilum (strain DSM 24528 / JCM 14929 / IAM 14863 / T)).